The chain runs to 430 residues: Adenylosuccinate synthetase (430 aa).

GTP is bound by residues 12–18 and 40–42; these read GDEGKGK and GHT. Asp13 serves as the catalytic Proton acceptor. Mg(2+)-binding residues include Asp13 and Gly40. IMP contacts are provided by residues 13–16, 38–41, Thr128, Arg142, Gln223, Thr238, and Arg302; these read DEGK and NAGH. His41 acts as the Proton donor in catalysis. 298 to 304 contributes to the substrate binding site; that stretch reads TTTGRPR. GTP is bound by residues Arg304, 330–332, and 412–414; these read SID and SVG.

It belongs to the adenylosuccinate synthetase family. In terms of assembly, homodimer. Mg(2+) serves as cofactor.

It localises to the cytoplasm. It carries out the reaction IMP + L-aspartate + GTP = N(6)-(1,2-dicarboxyethyl)-AMP + GDP + phosphate + 2 H(+). It functions in the pathway purine metabolism; AMP biosynthesis via de novo pathway; AMP from IMP: step 1/2. Functionally, plays an important role in the de novo pathway of purine nucleotide biosynthesis. Catalyzes the first committed step in the biosynthesis of AMP from IMP. In Streptococcus uberis (strain ATCC BAA-854 / 0140J), this protein is Adenylosuccinate synthetase.